The chain runs to 226 residues: Transcriptional regulatory protein PcoR (226 aa).

The Response regulatory domain occupies 3–117 (RILIVEDEQK…ELVARVRTLL (115 aa)). Asp-52 bears the 4-aspartylphosphate mark. Positions 125–223 (ATVCTIADMT…VRGAGYVLEI (99 aa)) form a DNA-binding region, ompR/PhoB-type.

In terms of processing, phosphorylated by PcoS.

Its subcellular location is the cytoplasm. Functionally, probable member of a two-component regulatory system PcoS/PcoR. May be involved in the activation of copper resistance gene operon pcoABCD by binding to a specific site on the cop operon promoter (copper box). The protein is Transcriptional regulatory protein PcoR (pcoR) of Escherichia coli.